Consider the following 496-residue polypeptide: GTPase Der (496 aa).

EngA-type G domains follow at residues 3–166 (PVIA…VGKF) and 209–382 (VKLA…TCAT). Residues 9–16 (GRPNVGKS), 56–60 (DTGGI), 118–121 (NKTD), 215–222 (GRPNVGKS), 262–266 (DTAGV), and 327–330 (NKWD) each bind GTP. Residues 383-467 (RRVGTSMLTR…PIRIQFKEGE (85 aa)) form the KH-like domain.

Belongs to the TRAFAC class TrmE-Era-EngA-EngB-Septin-like GTPase superfamily. EngA (Der) GTPase family. Associates with the 50S ribosomal subunit.

Its function is as follows. GTPase that plays an essential role in the late steps of ribosome biogenesis. This is GTPase Der from Proteus mirabilis (strain HI4320).